Here is a 370-residue protein sequence, read N- to C-terminus: Putative alanine racemase 2 (370 aa).

The Proton acceptor; specific for D-alanine role is filled by lysine 38. N6-(pyridoxal phosphate)lysine is present on lysine 38. Residue tyrosine 266 is the Proton acceptor; specific for L-alanine of the active site.

Belongs to the alanine racemase family. Requires pyridoxal 5'-phosphate as cofactor.

The enzyme catalyses L-alanine = D-alanine. The polypeptide is Putative alanine racemase 2 (alr2) (Schizosaccharomyces pombe (strain 972 / ATCC 24843) (Fission yeast)).